Consider the following 324-residue polypeptide: Beta-ketoacyl-[acyl-carrier-protein] synthase III (324 aa).

Catalysis depends on residues C112 and H251. The ACP-binding stretch occupies residues 252–256 (QANLR). The active site involves N281.

Belongs to the thiolase-like superfamily. FabH family. Homodimer.

The protein resides in the cytoplasm. The catalysed reaction is malonyl-[ACP] + acetyl-CoA + H(+) = 3-oxobutanoyl-[ACP] + CO2 + CoA. Its pathway is lipid metabolism; fatty acid biosynthesis. In terms of biological role, catalyzes the condensation reaction of fatty acid synthesis by the addition to an acyl acceptor of two carbons from malonyl-ACP. Catalyzes the first condensation reaction which initiates fatty acid synthesis and may therefore play a role in governing the total rate of fatty acid production. Possesses both acetoacetyl-ACP synthase and acetyl transacylase activities. Its substrate specificity determines the biosynthesis of branched-chain and/or straight-chain of fatty acids. In Clostridium perfringens (strain SM101 / Type A), this protein is Beta-ketoacyl-[acyl-carrier-protein] synthase III.